A 208-amino-acid chain; its full sequence is Phomoidride biosynthesis cluster protein B (208 aa).

It belongs to the tstB family.

In terms of biological role, phosphatidylethanolamine-binding protein; part of the gene cluster that mediates the biosynthesis of the antihypercholesterolemic agents phomoidrides which are dimeric anhydrides. Within the pathway, phiB is not essential for dimerization and its function has still to be determined. The pathway begins with the highly reducing polyketide synthase phiA that catalyzes the formation of a C12-fatty acyl-ACP, starting from one acetate and 5 malonate units. The hydrolase phiM is involved in the release of the C12-fatty acyl chain from phiA. The alkylcitrate synthase (ACS) phiJ and the alkylcitrate dehydratase (ACDH) phiI then give rise to decarboxylated monomeric anhydrides by coupling the C12-fatty acyl chain with oxalacetic acid. The cyclase phiC is responsible for the dimerization of the monomeric anhydrides which leads to the production of prephomoidride that contains the characteristic bicyclo[4.3.1]deca-1,6-diene system of phomoidrides. Iterative oxidation catalyzed by the alpha-ketoglutarate-dependent dioxygenase phiK produced then phomoidride A. Finally, the methyltransferase phiE converts phomoidride A to phomoidride B via an acetalization reaction. The phosphatidylethanolamine-binding protein phiB and phiN are not essential for dimerization and their functions have still to be determined. In Fungal sp. (strain ATCC 74256), this protein is Phomoidride biosynthesis cluster protein B.